Reading from the N-terminus, the 183-residue chain is ATP synthase subunit delta (183 aa).

The protein belongs to the ATPase delta chain family. F-type ATPases have 2 components, F(1) - the catalytic core - and F(0) - the membrane proton channel. F(1) has five subunits: alpha(3), beta(3), gamma(1), delta(1), epsilon(1). F(0) has three main subunits: a(1), b(2) and c(10-14). The alpha and beta chains form an alternating ring which encloses part of the gamma chain. F(1) is attached to F(0) by a central stalk formed by the gamma and epsilon chains, while a peripheral stalk is formed by the delta and b chains.

It is found in the cell inner membrane. Functionally, f(1)F(0) ATP synthase produces ATP from ADP in the presence of a proton or sodium gradient. F-type ATPases consist of two structural domains, F(1) containing the extramembraneous catalytic core and F(0) containing the membrane proton channel, linked together by a central stalk and a peripheral stalk. During catalysis, ATP synthesis in the catalytic domain of F(1) is coupled via a rotary mechanism of the central stalk subunits to proton translocation. This protein is part of the stalk that links CF(0) to CF(1). It either transmits conformational changes from CF(0) to CF(1) or is implicated in proton conduction. The chain is ATP synthase subunit delta from Thermotoga maritima (strain ATCC 43589 / DSM 3109 / JCM 10099 / NBRC 100826 / MSB8).